Here is a 299-residue protein sequence, read N- to C-terminus: tRNA dimethylallyltransferase (299 aa).

11-18 (GPTAVGKT) provides a ligand contact to ATP. 13–18 (TAVGKT) lines the substrate pocket. The segment at 36–39 (DSQQ) is interaction with substrate tRNA.

Belongs to the IPP transferase family. As to quaternary structure, monomer. Requires Mg(2+) as cofactor.

It carries out the reaction adenosine(37) in tRNA + dimethylallyl diphosphate = N(6)-dimethylallyladenosine(37) in tRNA + diphosphate. In terms of biological role, catalyzes the transfer of a dimethylallyl group onto the adenine at position 37 in tRNAs that read codons beginning with uridine, leading to the formation of N6-(dimethylallyl)adenosine (i(6)A). This is tRNA dimethylallyltransferase from Streptococcus pyogenes serotype M6 (strain ATCC BAA-946 / MGAS10394).